Consider the following 197-residue polypeptide: Cell division protein SepF (197 aa).

Residues 15-91 (DEEEVESPEE…PPSKSNGKNV (77 aa)) are disordered. Residues 22 to 31 (PEERQRRVVQ) show a composition bias toward basic and acidic residues. Positions 37 to 47 (TNNVQQNQPQQ) are enriched in low complexity. 2 stretches are compositionally biased toward polar residues: residues 48–58 (SERSYSNQSKL) and 78–91 (RMNQ…GKNV).

The protein belongs to the SepF family. In terms of assembly, homodimer. Interacts with FtsZ.

It is found in the cytoplasm. In terms of biological role, cell division protein that is part of the divisome complex and is recruited early to the Z-ring. Probably stimulates Z-ring formation, perhaps through the cross-linking of FtsZ protofilaments. Its function overlaps with FtsA. The polypeptide is Cell division protein SepF (Staphylococcus haemolyticus (strain JCSC1435)).